Reading from the N-terminus, the 631-residue chain is Cyclic nucleotide-gated channel alpha-3 (631 aa).

Polar residues predominate over residues 1–18 (MAKVNTQCSQPSPTQLSI). 2 disordered regions span residues 1–21 (MAKVNTQCSQPSPTQLSIKNA) and 71–98 (EVSTRESNAQPNPGEQKPPDGGEGRKEE). The Cytoplasmic portion of the chain corresponds to 1–111 (MAKVNTQCSQ…VDPSSNIYYR (111 aa)). Positions 87–98 (KPPDGGEGRKEE) are enriched in basic and acidic residues. Residues 112–133 (WLTAIALPVFYNWCLLVCRACF) traverse the membrane as a helical segment. Residues 134–139 (DELQSE) are Extracellular-facing. Residues 140–160 (HLTLWLVLDYSADVLYVLDML) form a helical membrane-spanning segment. The Cytoplasmic portion of the chain corresponds to 161–187 (VRARTGFLEQGLMVRDTKRLWKHYTKT). The helical transmembrane segment at 188–207 (LHFKLDILSLIPTDLAYLKL) threads the bilayer. Residues 208-211 (GVNY) are Extracellular-facing. A helical transmembrane segment spans residues 212–229 (PELRFNRLLKFSRLFEFF). The Cytoplasmic portion of the chain corresponds to 230–239 (DRTETRTNYP). Positions 239–347 (PNVFRIGNLV…GNVGSMISNM (109 aa)) are ion conduction pathway. Residues 240–262 (NVFRIGNLVLYTLIIIHWNACIY) form a helical membrane-spanning segment. Topologically, residues 263–288 (FAISKFIGFGTDSWVYPNTSKPEYAR) are extracellular. Asparagine 280 carries an N-linked (GalNAc...) asparagine glycan. 2 consecutive transmembrane segments (helical) span residues 289–319 (LSRKYIYSLYWSTLTLTTIGETPPPVKDEEY) and 320–344 (LFVVIDFLVGILIFATIVGNVGSMI). The selectivity filter stretch occupies residues 306–309 (TIGE). The Cytoplasmic segment spans residues 345 to 631 (SNMNAPRVEF…ENSEDASKTD (287 aa)). A C-linker region spans residues 349–426 (APRVEFQAKI…TLKKVRIFQD (78 aa)). Residues 429–549 (AGLLVELVLK…EEKGRQILMK (121 aa)) form a cyclic nucleotide-binding domain region. 3',5'-cyclic GMP-binding residues include glycine 489, glutamate 490, serine 492, arginine 505, threonine 506, and aspartate 550. Positions 567–610 (VEEKVEYLESSLDILQTRFARLLAEYSASQMKLKQRLTRLESQM) form a coiled coil.

It belongs to the cyclic nucleotide-gated cation channel (TC 1.A.1.5) family. CNGA3 subfamily. Forms heterotetrameric channels composed of CNGA3 and CNGB3 subunits with 3:1 stoichiometry. In terms of tissue distribution, prominently expressed in retina.

The protein localises to the cell membrane. The enzyme catalyses Ca(2+)(in) = Ca(2+)(out). The catalysed reaction is Na(+)(in) = Na(+)(out). It catalyses the reaction K(+)(in) = K(+)(out). It carries out the reaction NH4(+)(in) = NH4(+)(out). The enzyme catalyses Rb(+)(in) = Rb(+)(out). The catalysed reaction is Li(+)(in) = Li(+)(out). It catalyses the reaction Cs(+)(in) = Cs(+)(out). Its function is as follows. Pore-forming subunit of the cone cyclic nucleotide-gated channel. Mediates cone photoresponses at bright light converting transient changes in intracellular cGMP levels into electrical signals. In the dark, cGMP levels are high and keep the channel open enabling a steady inward current carried by Na(+) and Ca(2+) ions that leads to membrane depolarization and neurotransmitter release from synaptic terminals. Upon photon absorption cGMP levels decline leading to channel closure and membrane hyperpolarization that ultimately slows neurotransmitter release and signals the presence of light, the end point of the phototransduction cascade. Pore-forming subunit of the gustatory cyclic nucleotide-gated channel. In the taste buds, may sense oral extracellular pH and conduct ion currents that modulate the excitability of taste cells. Conducts cGMP- and cAMP-gated ion currents, with permeability for monovalent and divalent cations. This Mus musculus (Mouse) protein is Cyclic nucleotide-gated channel alpha-3.